The following is an 85-amino-acid chain: U1-ctenitoxin-Pn1a (85 aa).

A signal peptide spans 1–16 (MKVAIVFLSLLVLAFA). Residues 17–34 (SESIEENREEFPVEESAR) constitute a propeptide that is removed on maturation. 5 disulfides stabilise this stretch: C35–C49, C42–C55, C46–C81, C48–C65, and C57–C63. A propeptide spanning residues 82–85 (QNKI) is cleaved from the precursor.

It belongs to the neurotoxin 03 (Tx2) family. 05 subfamily. As to expression, expressed by the venom gland.

It is found in the secreted. Insecticidal neurotoxin that reversibly inhibits the N-methyl-D-aspartate (NMDA)-subtype of ionotropic glutamate receptor (GRIN) and inhibits inactivation of insect sodium channels (Nav). In vivo, is highly toxic to insects. This Phoneutria nigriventer (Brazilian armed spider) protein is U1-ctenitoxin-Pn1a.